The chain runs to 316 residues: MNSRILSTGSYLPSHIRTNADLEKMVDTSDEWIVTRSGIRERRIAAEDETVATMGFEAAKNAIEAAQINPQDIELIIVATTSHSHAYPSAACQVQGLLNIDDAISFDLAAACTGFVYALSVADQFIRAGKVKKALVIGSDLNSRKLDETDRSTVVLFGDGAGAVILEASEQEGIISTHLHASADKNNALVLAQPERGIEKSGYIEMQGNETFKLAVRELSNVVEETLLANNLDKKDLDWLVPHQANLRIITATAKKLEMDMSQVVVTLDKYANNSAATVPVALDEAIRDGRIQRGQLLLLEAFGGGWTWGSALVRF.

Catalysis depends on residues Cys112 and His243. The interval 244–248 (QANLR) is ACP-binding. The active site involves Asn273.

This sequence belongs to the thiolase-like superfamily. FabH family. In terms of assembly, homodimer.

The protein localises to the cytoplasm. The catalysed reaction is malonyl-[ACP] + acetyl-CoA + H(+) = 3-oxobutanoyl-[ACP] + CO2 + CoA. Its pathway is lipid metabolism; fatty acid biosynthesis. Catalyzes the condensation reaction of fatty acid synthesis by the addition to an acyl acceptor of two carbons from malonyl-ACP. Catalyzes the first condensation reaction which initiates fatty acid synthesis and may therefore play a role in governing the total rate of fatty acid production. Possesses both acetoacetyl-ACP synthase and acetyl transacylase activities. Its substrate specificity determines the biosynthesis of branched-chain and/or straight-chain of fatty acids. This is Beta-ketoacyl-[acyl-carrier-protein] synthase III from Haemophilus influenzae (strain 86-028NP).